The chain runs to 851 residues: Probable disease resistance protein At1g15890 (851 aa).

An NB-ARC domain is found at 139 to 441 (AEKIPAPKVE…CEGFIDGNED (303 aa)). 181–188 (GMGGVGKT) lines the ATP pocket. LRR repeat units follow at residues 514-535 (SLRR…SNSP), 536-557 (NLST…FFRF), 560-582 (ALVV…ISKL), 584-605 (SLQY…FKEL), and 607-629 (KLIH…ATSL).

Belongs to the disease resistance NB-LRR family.

Probable disease resistance protein. The protein is Probable disease resistance protein At1g15890 of Arabidopsis thaliana (Mouse-ear cress).